The sequence spans 196 residues: GTP cyclohydrolase-2 (196 aa).

49 to 53 (RVHSE) is a GTP binding site. Residues Cys54, Cys65, and Cys67 each coordinate Zn(2+). Residues Gln70, 92-94 (EGR), and Thr114 each bind GTP. The active-site Proton acceptor is Asp126. The active-site Nucleophile is Arg128. GTP contacts are provided by Thr149 and Lys154.

Belongs to the GTP cyclohydrolase II family. Homodimer. Requires Zn(2+) as cofactor.

The catalysed reaction is GTP + 4 H2O = 2,5-diamino-6-hydroxy-4-(5-phosphoribosylamino)-pyrimidine + formate + 2 phosphate + 3 H(+). It functions in the pathway cofactor biosynthesis; riboflavin biosynthesis; 5-amino-6-(D-ribitylamino)uracil from GTP: step 1/4. In terms of biological role, catalyzes the conversion of GTP to 2,5-diamino-6-ribosylamino-4(3H)-pyrimidinone 5'-phosphate (DARP), formate and pyrophosphate. The polypeptide is GTP cyclohydrolase-2 (Enterobacter sp. (strain 638)).